Consider the following 215-residue polypeptide: Probable transaldolase (215 aa).

Catalysis depends on Lys-83, which acts as the Schiff-base intermediate with substrate.

It belongs to the transaldolase family. Type 3B subfamily.

It localises to the cytoplasm. The catalysed reaction is D-sedoheptulose 7-phosphate + D-glyceraldehyde 3-phosphate = D-erythrose 4-phosphate + beta-D-fructose 6-phosphate. The protein operates within carbohydrate degradation; pentose phosphate pathway; D-glyceraldehyde 3-phosphate and beta-D-fructose 6-phosphate from D-ribose 5-phosphate and D-xylulose 5-phosphate (non-oxidative stage): step 2/3. In terms of biological role, transaldolase is important for the balance of metabolites in the pentose-phosphate pathway. The chain is Probable transaldolase from Anaeromyxobacter sp. (strain Fw109-5).